We begin with the raw amino-acid sequence, 88 residues long: MATNDKTMFFDFGQERQEDIKQTLKTVYESLEEKGYNPINQIVGYLLSGDPAYIPRLNDARNLIRQHERDEIIEELVRSYLKNNGETK.

The protein belongs to the UPF0297 family.

This is UPF0297 protein LAR_0520 from Limosilactobacillus reuteri subsp. reuteri (strain JCM 1112) (Lactobacillus reuteri).